Consider the following 118-residue polypeptide: Non-specific lipid-transfer protein 1 (118 aa).

An N-terminal signal peptide occupies residues 1-25 (MAGVMKLACLLLACMIVAGPITSNA). Cystine bridges form between C29–C76, C39–C53, C54–C100, and C74–C114.

Belongs to the plant LTP family. In terms of tissue distribution, expressed primarily in epidermal cells.

It is found in the secreted. It localises to the cell wall. Its function is as follows. Plant non-specific lipid-transfer proteins transfer phospholipids as well as galactolipids across membranes. May play a role in wax or cutin deposition in the cell walls of expanding epidermal cells and certain secretory tissues. In Arabidopsis thaliana (Mouse-ear cress), this protein is Non-specific lipid-transfer protein 1 (LTP1).